Reading from the N-terminus, the 419-residue chain is AT-hook motif nuclear-localized protein 4 (419 aa).

3 disordered regions span residues 1 to 168 (MEER…SGGG), 301 to 337 (QQQQQQIKKQRRERLGIPTTTQASNISFGGSAEDPKA), and 382 to 419 (DLFSSLPGEDREEDEDDLEGEDDEEFGGHSESDTEVPS). The Bipartite nuclear localization signal motif lies at 78–86 (KKKRGRPRK). A DNA-binding region (a.T hook) is located at residues 78–90 (KKKRGRPRKYNPD). A compositionally biased stretch (polar residues) spans 101 to 112 (PISSSVPLTSEF). Over residues 115–130 (RKRGRGRGRGRGRGRG) the composition is skewed to basic residues. Residues 136-148 (GSREPNNNNNDNN) are compositionally biased toward low complexity. Residues 174-314 (VSPSFTPHVL…QQIKKQRRER (141 aa)) form the PPC domain. A compositionally biased stretch (polar residues) spans 318–328 (PTTTQASNISF). The segment covering 391-406 (DREEDEDDLEGEDDEE) has biased composition (acidic residues).

Homodimer. Interacts with AHL3. Predominantly expressed in the stele of the root meristem with a specificity to the procambium.

It localises to the nucleus. Functionally, transcription factor that specifically binds AT-rich DNA sequences related to the nuclear matrix attachment regions (MARs). Acts redundantly with AHL3 to regulate the formation of tissue boundary between the xylem and procambium in the root meristem. Cell-to-cell movement of AHL4 from the procambium to the xylem is critical for its function in root vascular patterning. The polypeptide is AT-hook motif nuclear-localized protein 4 (Arabidopsis thaliana (Mouse-ear cress)).